We begin with the raw amino-acid sequence, 138 residues long: Basic phospholipase A2 canebraxin B (138 aa).

Positions 1–16 are cleaved as a signal peptide; sequence MRALWIVAVLLVAVEG. 7 disulfide bridges follow: C42/C131, C44/C60, C59/C111, C65/C138, C66/C104, C73/C97, and C91/C102. Residues Y43, G45, and G47 each contribute to the Ca(2+) site. H63 is an active-site residue. Position 64 (D64) interacts with Ca(2+). The active site involves D105.

It belongs to the phospholipase A2 family. Group II subfamily. In terms of assembly, heterodimer of an acidic subunit and a basic chain. The acidic subunit is non-toxic, without enzymatic activity and comprises 3 peptides that are cross-linked by 7 disulfide bridges. The basic subunit is toxic, has phospholipase A2 activity and is composed of a single chain. The cofactor is Ca(2+). As to expression, expressed by the venom gland.

It is found in the secreted. The enzyme catalyses a 1,2-diacyl-sn-glycero-3-phosphocholine + H2O = a 1-acyl-sn-glycero-3-phosphocholine + a fatty acid + H(+). Snake venom phospholipase A2 (PLA2) that shows presynaptic neurotoxicity. PLA2 catalyzes the calcium-dependent hydrolysis of the 2-acyl groups in 3-sn-phosphoglycerides. This chain is Basic phospholipase A2 canebraxin B, found in Crotalus horridus (Timber rattlesnake).